A 447-amino-acid polypeptide reads, in one-letter code: uncharacterized protein (447 aa).

This sequence to E.coli plasmid IncP-alpha RP4 protein TraN.

This is an uncharacterized protein from Haemophilus influenzae (strain ATCC 51907 / DSM 11121 / KW20 / Rd).